Consider the following 80-residue polypeptide: Raniseptin-4 (80 aa).

A signal peptide spans 1-22 (MAFLKKSLFLVLFLGIVSLSIC). Residues 23-49 (EEEKREGEEEEKQEEENEELSEEELRD) constitute a propeptide that is removed on maturation.

Belongs to the frog skin active peptide (FSAP) family. Dermaseptin subfamily. Expressed by the skin glands.

Its subcellular location is the secreted. Has antibacterial activity. This chain is Raniseptin-4, found in Boana raniceps (Chaco tree frog).